Here is a 254-residue protein sequence, read N- to C-terminus: Translation initiation factor 2 subunit alpha (254 aa).

An S1 motif domain is found at 10–81; sequence GDLVVVKITE…ERKNVDLSLK (72 aa).

This sequence belongs to the eIF-2-alpha family. As to quaternary structure, heterotrimer composed of an alpha, a beta and a gamma chain.

Its function is as follows. eIF-2 functions in the early steps of protein synthesis by forming a ternary complex with GTP and initiator tRNA. In Thermoplasma volcanium (strain ATCC 51530 / DSM 4299 / JCM 9571 / NBRC 15438 / GSS1), this protein is Translation initiation factor 2 subunit alpha.